We begin with the raw amino-acid sequence, 376 residues long: Cysteine proteinase 2 (376 aa).

A signal peptide spans 1 to 18; that stretch reads MRLLVFLILLIFVNFSFA. A propeptide spans 19 to 122 (activation peptide); that stretch reads NVRPNGRRFS…EVLNVEDLQT (104 aa). Cystine bridges form between Cys144–Cys187, Cys178–Cys221, and Cys279–Cys365. The active site involves Cys147. Active-site residues include His286 and Asn343.

This sequence belongs to the peptidase C1 family.

It is found in the lysosome. Its function is as follows. Cysteine proteinases 1 and 2 are believed to participate in the breakdown of protein during differentiation of Dictyostelium as a response to starvation. This is Cysteine proteinase 2 (cprB) from Dictyostelium discoideum (Social amoeba).